Here is a 459-residue protein sequence, read N- to C-terminus: Serine permease SerP1 (459 aa).

A run of 12 helical transmembrane segments spans residues 19–39, 42–62, 97–117, 119–139, 153–173, 212–232, 254–274, 281–301, 341–361, 370–390, 412–432, and 436–456; these read IQLI…AGKT, MTGP…FFFL, SYWL…GTYI, FWLP…LLFG, FWFA…AIIL, FVGA…IGMT, ILLF…WHYI, FVIV…NFVV, AGIP…APVL, AFNF…FITL, PTIA…SLFF, and TFYP…YSHF.

The protein belongs to the amino acid-polyamine-organocation (APC) superfamily. Amino acid transporter (AAT) (TC 2.A.3.1) family.

The protein resides in the cell membrane. Functionally, transports L-serine, L-threonine and L-cysteine with high affinity. Stereoselective, with a strong preference for L-serine. Is the main L-serine transporter and is responsible for optimal growth in media containing free amino acids as the sole source of amino acids. Is also the main transporter for L-threonine. The sequence is that of Serine permease SerP1 from Lactococcus lactis subsp. cremoris (strain MG1363).